The sequence spans 341 residues: Myb-related transcription factor, partner of profilin (341 aa).

Residues 8-80 (VTRLRKPRFS…EVQKRWNDFK (73 aa)) enclose the Myb-like domain. Disordered regions lie at residues 84–103 (KEKL…EEAM), 180–210 (LPHL…PSGV), and 309–341 (AEPP…WKNL). Residues 184 to 200 (TPSPDPSECPSPPPPGS) show a composition bias toward pro residues. A compositionally biased stretch (basic residues) spans 321 to 341 (NKRKRFGYLSQRKRRGRWKNL).

The protein localises to the nucleus. Functionally, transcriptional repressor; DNA-binding protein that specifically recognizes the core sequence 5'-YAAC[GT]G-3'. This chain is Myb-related transcription factor, partner of profilin (mypop), found in Xenopus laevis (African clawed frog).